The primary structure comprises 367 residues: Leucine-rich repeat-containing protein 28 (367 aa).

LRR repeat units lie at residues 16–36 (KHKN…ELLK), 42–63 (HLER…LAQK), 66–87 (NLVE…IGSL), 89–111 (KLQC…GGLR), 112–133 (ALRH…VGDL), 135–156 (ELQT…LHLC), 158–180 (SLQY…CQLP), 181–202 (SLNE…LGRS), and 204–226 (ELQY…LYNK).

The polypeptide is Leucine-rich repeat-containing protein 28 (Lrrc28) (Mus musculus (Mouse)).